Here is a 417-residue protein sequence, read N- to C-terminus: Actin-like protein 7B (417 aa).

A disordered region spans residues 1 to 39 (MATKNNPSPKPMGTAQGDPGEAGTLPAPEAGIRDTGSTQ). S8 carries the phosphoserine modification.

This sequence belongs to the actin family.

It is found in the cytoplasm. The protein localises to the cytoskeleton. The polypeptide is Actin-like protein 7B (Actl7b) (Rattus norvegicus (Rat)).